A 141-amino-acid chain; its full sequence is Nucleoside diphosphate kinase (141 aa).

6 residues coordinate ATP: Lys11, Phe59, Arg87, Thr93, Arg104, and Asn114. His117 (pros-phosphohistidine intermediate) is an active-site residue.

This sequence belongs to the NDK family. In terms of assembly, homotetramer. Requires Mg(2+) as cofactor.

The protein localises to the cytoplasm. The enzyme catalyses a 2'-deoxyribonucleoside 5'-diphosphate + ATP = a 2'-deoxyribonucleoside 5'-triphosphate + ADP. It catalyses the reaction a ribonucleoside 5'-diphosphate + ATP = a ribonucleoside 5'-triphosphate + ADP. Its function is as follows. Major role in the synthesis of nucleoside triphosphates other than ATP. The ATP gamma phosphate is transferred to the NDP beta phosphate via a ping-pong mechanism, using a phosphorylated active-site intermediate. The sequence is that of Nucleoside diphosphate kinase from Legionella pneumophila (strain Lens).